We begin with the raw amino-acid sequence, 312 residues long: Prephenate dehydratase (312 aa).

Residues 3 to 194 (GIAYLGPEGT…ARTRFVLVGR (192 aa)) enclose the Prephenate dehydratase domain. The region spanning 208–285 (SVVLQLDNVP…ADVRYLGSWP (78 aa)) is the ACT domain. The segment at 291–312 (GAAPPPMDESASWLEGLREGRP) is disordered.

Homodimer.

The catalysed reaction is prephenate + H(+) = 3-phenylpyruvate + CO2 + H2O. It participates in amino-acid biosynthesis; L-phenylalanine biosynthesis; phenylpyruvate from prephenate: step 1/1. This is Prephenate dehydratase (pheA) from Mycolicibacterium vanbaalenii (strain DSM 7251 / JCM 13017 / BCRC 16820 / KCTC 9966 / NRRL B-24157 / PYR-1) (Mycobacterium vanbaalenii).